A 458-amino-acid chain; its full sequence is Argininosuccinate lyase (458 aa).

This sequence belongs to the lyase 1 family. Argininosuccinate lyase subfamily.

The protein localises to the cytoplasm. It catalyses the reaction 2-(N(omega)-L-arginino)succinate = fumarate + L-arginine. The protein operates within amino-acid biosynthesis; L-arginine biosynthesis; L-arginine from L-ornithine and carbamoyl phosphate: step 3/3. This is Argininosuccinate lyase from Neisseria meningitidis serogroup C / serotype 2a (strain ATCC 700532 / DSM 15464 / FAM18).